The primary structure comprises 356 residues: NAC domain-containing protein JA2L (356 aa).

Positions 14–162 (LPPGFRFYPT…DWVLCRIYKK (149 aa)) constitute an NAC domain. The DNA-binding element occupies 111 to 168 (VGIKKALVFYIGKAPKGTKTNWIMHEYRLSEPTTKTGSSRLDDWVLCRIYKKNSGGQK). The tract at residues 163–191 (NSGGQKSSCSDLQNKDISHASSSSSSSQF) is disordered. Positions 164–174 (SGGQKSSCSDL) are enriched in polar residues.

As to expression, expressed in guard cells of the epidermis.

It localises to the nucleus. Its function is as follows. Transcription factor that acts downstream of MYC2 in the jasmonate-mediated response to Botrytis cinerea infection. With MYC2 forms a transcription module that regulates wounding-responsive genes. Involved in jasmonate- and coronatine-mediated stomatal reopening in response to Pseudomonas syringae pv tomato DC3000 infection. Regulates the expression of threonine deaminase 2 (TD2) through promoter binding. In Solanum lycopersicum (Tomato), this protein is NAC domain-containing protein JA2L.